The sequence spans 1216 residues: Regulator of telomere elongation helicase 1 (1216 aa).

The 289-residue stretch at 7–295 (KGVTVDFPFQ…TKVAQQAELH (289 aa)) folds into the Helicase ATP-binding domain. An ATP-binding site is contributed by 42–49 (SPTGTGKT). Residues cysteine 144, cysteine 162, cysteine 171, and cysteine 206 each coordinate [4Fe-4S] cluster. The Nuclear localization signal signature appears at 150–166 (KKQESNHMQVHLCRRKV). Positions 249-252 (DEAH) match the DEAH box motif. The Nuclear localization signal motif lies at 874-880 (QRGRRRK). Disordered stretches follow at residues 978-1018 (GCSS…ATRQ) and 1140-1172 (GPGT…RKTQ). The PIP-box motif lies at 1172–1179 (QSKISSFL).

It belongs to the helicase family. RAD3/XPD subfamily. In terms of assembly, interacts with TERF1. Interacts (via PIP-box) with PCNA; the interaction is direct and essential for suppressing telomere fragility. Interacts with MMS19; the interaction mediates the association of RTEL1 with the cytosolic iron-sulfur protein assembly (CIA) complex. Highly expressed in adult testis, liver and ovary.

The protein resides in the nucleus. The catalysed reaction is ATP + H2O = ADP + phosphate + H(+). Functionally, a probable ATP-dependent DNA helicase implicated in telomere-length regulation, DNA repair and the maintenance of genomic stability. Acts as an anti-recombinase to counteract toxic recombination and limit crossover during meiosis. Regulates meiotic recombination and crossover homeostasis by physically dissociating strand invasion events and thereby promotes noncrossover repair by meiotic synthesis dependent strand annealing (SDSA) as well as disassembly of D loop recombination intermediates. Also disassembles T loops and prevents telomere fragility by counteracting telomeric G4-DNA structures, which together ensure the dynamics and stability of the telomere. The chain is Regulator of telomere elongation helicase 1 from Bos taurus (Bovine).